The sequence spans 279 residues: Small ribosomal subunit protein uS3 (279 aa).

The KH type-2 domain maps to 17–86 (VDEYFLEKLE…NPQIDVQEVK (70 aa)). Low complexity-rich tracts occupy residues 206–233 (AEKK…STAA) and 241–252 (ESEAAEAVTPEG). A disordered region spans residues 206 to 279 (AEKKSPAAGA…VVKTDGDSQS (74 aa)).

The protein belongs to the universal ribosomal protein uS3 family. In terms of assembly, part of the 30S ribosomal subunit.

In terms of biological role, binds the lower part of the 30S subunit head. This is Small ribosomal subunit protein uS3 from Methanocella arvoryzae (strain DSM 22066 / NBRC 105507 / MRE50).